The chain runs to 725 residues: Glutamine-dependent NAD(+) synthetase (725 aa).

The 271-residue stretch at 5 to 275 folds into the CN hydrolase domain; sequence VTVATCALNQ…VEVLTATLDL (271 aa). The Proton acceptor; for glutaminase activity role is filled by E45. The active-site For glutaminase activity is the K114. C175 functions as the Nucleophile; for glutaminase activity in the catalytic mechanism. The interval 325–706 is ligase; sequence YHRPEEEISL…KASQTREEQV (382 aa). 355 to 362 provides a ligand contact to ATP; the sequence is PLSGGVDS. The active site involves S357.

The protein in the C-terminal section; belongs to the NAD synthetase family. Homohexamer. In terms of tissue distribution, highly expressed in small intestine, kidney, liver and testis. Weakly expressed in skeletal muscle, spleen, lung, heart and brain.

The enzyme catalyses deamido-NAD(+) + L-glutamine + ATP + H2O = L-glutamate + AMP + diphosphate + NAD(+) + H(+). It functions in the pathway cofactor biosynthesis; NAD(+) biosynthesis; NAD(+) from deamido-NAD(+) (L-Gln route): step 1/1. Functionally, catalyzes the final step of the nicotinamide adenine dinucleotide (NAD) de novo synthesis pathway, the ATP-dependent amidation of deamido-NAD using L-glutamine as a nitrogen source. This is Glutamine-dependent NAD(+) synthetase (Nadsyn1) from Mus musculus (Mouse).